We begin with the raw amino-acid sequence, 194 residues long: Transmembrane protein 212 (194 aa).

5 helical membrane passes run isoleucine 11–phenylalanine 31, isoleucine 44–alanine 64, alanine 76–leucine 96, alanine 99–glycine 119, and leucine 148–isoleucine 168.

It localises to the membrane. This Homo sapiens (Human) protein is Transmembrane protein 212 (TMEM212).